A 420-amino-acid polypeptide reads, in one-letter code: Septin-8-A (420 aa).

The 267-residue stretch at 39 to 305 (QGFCFNILCV…ELYRRCKLEE (267 aa)) folds into the Septin-type G domain. The G1 motif stretch occupies residues 49–56 (GETGIGKS). GTP is bound by residues 49–56 (GETGIGKS), Gly104, 185–193 (KADTISKSE), Gly239, and Arg254. The tract at residues 101–104 (DTVG) is G3 motif. The interval 184 to 187 (AKAD) is G4 motif. Residues 321–407 (QETYEAKRKE…RRKVAAETLS (87 aa)) are a coiled coil. The segment at 393 to 420 (MNAFNRRKVAAETLSLSQPLKKDKDKKN) is disordered.

It belongs to the TRAFAC class TrmE-Era-EngA-EngB-Septin-like GTPase superfamily. Septin GTPase family.

The chain is Septin-8-A (sept8a) from Danio rerio (Zebrafish).